The following is a 241-amino-acid chain: MLVVPAIDLFRGKVARMVKGKKENTIFYEKDPAELVKKLIEEGFTLIHVVDLSKAIENSVENFPVLERLSEFAEHIQIGGGIRSFDYAERLRKLGYKRQIVSSKVLEDPSFLKFLKEIDVEPVFSLDTRGGKVAFKGWLAEEEIDPISLLKRLKEYGLEEIVHTEIEKDGTLQEHDFSLTRKIAIEAEVNVFAAGGISSENSLKTAQRVHRETNGLLKGVIVGRAFLEGILTVEVMKRYAR.

The Proton acceptor role is filled by D8. The active-site Proton donor is D127.

This sequence belongs to the HisA/HisF family.

The protein localises to the cytoplasm. The catalysed reaction is 1-(5-phospho-beta-D-ribosyl)-5-[(5-phospho-beta-D-ribosylamino)methylideneamino]imidazole-4-carboxamide = 5-[(5-phospho-1-deoxy-D-ribulos-1-ylimino)methylamino]-1-(5-phospho-beta-D-ribosyl)imidazole-4-carboxamide. Its pathway is amino-acid biosynthesis; L-histidine biosynthesis; L-histidine from 5-phospho-alpha-D-ribose 1-diphosphate: step 4/9. The polypeptide is 1-(5-phosphoribosyl)-5-[(5-phosphoribosylamino)methylideneamino] imidazole-4-carboxamide isomerase (Thermotoga petrophila (strain ATCC BAA-488 / DSM 13995 / JCM 10881 / RKU-1)).